The chain runs to 550 residues: Glucose-6-phosphate isomerase (550 aa).

E356 serves as the catalytic Proton donor. Residues H387 and K515 contribute to the active site.

Belongs to the GPI family.

It is found in the cytoplasm. The enzyme catalyses alpha-D-glucose 6-phosphate = beta-D-fructose 6-phosphate. The protein operates within carbohydrate biosynthesis; gluconeogenesis. Its pathway is carbohydrate degradation; glycolysis; D-glyceraldehyde 3-phosphate and glycerone phosphate from D-glucose: step 2/4. Its function is as follows. Catalyzes the reversible isomerization of glucose-6-phosphate to fructose-6-phosphate. This chain is Glucose-6-phosphate isomerase, found in Vibrio campbellii (strain ATCC BAA-1116).